We begin with the raw amino-acid sequence, 367 residues long: MSLADSVLAINNDLPIRTDSPVHSGKVRSVYWLTDADSRRLITTKGYNVPEDTPLAIMVISDRISAFDCIFHGEGGLKGIPGKGAALNAISNHWFKLFAENGLADSHILDIPHPFVWIVQKARPIKVEAICRQYITGSMWRAYSKGERVFCGITLPEGLEKAQKLPELLITPSTKGILTGIPGVPAQDDVNISRSDIEANYQAFGFEKLSDIDLYEKLLKDGFKVISKALADIDQVFVDTKFEFGYVTDKDGNSKLIYMDEVGTPDSSRIWDGAAYRDGKILENSKEGFRQFLLNHFPDPDVLLNKDRMPEREALARDNDLPLEAMMQVSRTYTGVAEKVTGAPIPLPANPKADIIKILKDEYDLIV.

The protein belongs to the SAICAR synthetase family.

The catalysed reaction is 5-amino-1-(5-phospho-D-ribosyl)imidazole-4-carboxylate + L-aspartate + ATP = (2S)-2-[5-amino-1-(5-phospho-beta-D-ribosyl)imidazole-4-carboxamido]succinate + ADP + phosphate + 2 H(+). It functions in the pathway purine metabolism; IMP biosynthesis via de novo pathway; 5-amino-1-(5-phospho-D-ribosyl)imidazole-4-carboxamide from 5-amino-1-(5-phospho-D-ribosyl)imidazole-4-carboxylate: step 1/2. The sequence is that of Phosphoribosylaminoimidazole-succinocarboxamide synthase from Shewanella baltica (strain OS155 / ATCC BAA-1091).